Here is a 433-residue protein sequence, read N- to C-terminus: MYILFSVLALSFIIFIHELGHFLFAKLFKVKVEVFSVGIGPSILKFKINNTEYRLSPILLGGYCKLKGFDHLEKELKANKELEADKDSLFGISHFKKILIYFAGPLFNLIFSFIVFIFISMAGVIYFDYSSRVSILNKDSLLKDKFRDGDVILKVNDKKIKYFSDLRKFIPEEKSTVMFDVLREKENITFKETVSLQDFLKEIGPWADLVIADVVSNSPAKIAGMKPGDEIISIDNVILKNKRDLDYFLKNLNSDVVEIKFSRNGEIFSSKLVFHDKNKMIGIYFSPPLKRVVKVENVSSAIKNSFFKVVSALQDILYSIFLLMTNFLNASKSVSGPVGIVGILSSSYSLGILYWINSISFLSLILAGMNLFFIVIPIFDGGQIFISFIELLRGKRFKAKTIYSFYSFGIFFGLFLFGLGLFNDLKGLLNIFN.

Residue H17 participates in Zn(2+) binding. E18 is an active-site residue. Residue H21 coordinates Zn(2+). Residues 98-120 (ILIYFAGPLFNLIFSFIVFIFIS) traverse the membrane as a helical segment. Residues 193–265 (TVSLQDFLKE…VVEIKFSRNG (73 aa)) form the PDZ domain. 3 helical membrane-spanning segments follow: residues 334–356 (VSGPVGIVGILSSSYSLGILYWI), 366–388 (LAGMNLFFIVIPIFDGGQIFISF), and 401–423 (TIYSFYSFGIFFGLFLFGLGLFN).

Belongs to the peptidase M50B family. Zn(2+) is required as a cofactor.

It localises to the cell inner membrane. The polypeptide is Putative zinc metalloprotease BB_0118 (Borreliella burgdorferi (strain ATCC 35210 / DSM 4680 / CIP 102532 / B31) (Borrelia burgdorferi)).